The primary structure comprises 335 residues: Putative type I specificity subunit S.MpnORF89P (335 aa).

Belongs to the type-I restriction system S methylase family. In terms of assembly, the methyltransferase is composed of M and S polypeptides.

In terms of biological role, the specificity (S) subunit of a type I methyltransferase (MTase); this subunit dictates DNA sequence specificity. The single R subunit has multiple frameshifts and is probably not expressed. The chain is Putative type I specificity subunit S.MpnORF89P from Mycoplasma pneumoniae (strain ATCC 29342 / M129 / Subtype 1) (Mycoplasmoides pneumoniae).